A 723-amino-acid polypeptide reads, in one-letter code: uncharacterized protein (723 aa).

Residues 1–12 show a composition bias toward basic residues; that stretch reads MTGKKKNRHQKK. 4 disordered regions span residues 1–166, 181–212, 268–289, and 391–455; these read MTGK…EKEI, IKRKKEKKVKPQPVQPTPPVPAPAPQQSSGWG, LPLSDTEDSDNDNDNGGDDNDN, and KNKS…NTST. The span at 30-42 shows a compositional bias: low complexity; the sequence is DETTTTTTTTTTT. Composition is skewed to basic and acidic residues over residues 45–129 and 149–166; these read EETK…KTDD and TDIKDEKKEEKKKVEKEI. Residues 53–173 are a coiled coil; it reads IVENKDEDKK…KEIEDPNKKY (121 aa). The span at 181–190 shows a compositional bias: basic residues; sequence IKRKKEKKVK. Pro residues predominate over residues 193 to 204; that stretch reads PVQPTPPVPAPA. The span at 272–288 shows a compositional bias: acidic residues; the sequence is DTEDSDNDNDNGGDDND. Positions 397-455 are enriched in low complexity; sequence DENNNNNNNNNQQQPQQQQTTSPTLSTSPTSPKSPTTTTTNTTTTTTTNTNNNNNNTST.

This is an uncharacterized protein from Dictyostelium discoideum (Social amoeba).